The primary structure comprises 205 residues: High frequency lysogenization protein HflD homolog (205 aa).

This sequence belongs to the HflD family.

It localises to the cytoplasm. The protein resides in the cell inner membrane. This chain is High frequency lysogenization protein HflD homolog, found in Shewanella baltica (strain OS185).